A 362-amino-acid polypeptide reads, in one-letter code: 3-isopropylmalate dehydrogenase (362 aa).

78–91 (GPKWEHLAPNDQPE) lines the NAD(+) pocket. Positions 99, 109, 138, and 227 each coordinate substrate. Mg(2+) is bound by residues D227, D251, and D255. 285–297 (GSAPDIAGKNIAN) is an NAD(+) binding site.

The protein belongs to the isocitrate and isopropylmalate dehydrogenases family. LeuB type 1 subfamily. As to quaternary structure, homodimer. The cofactor is Mg(2+). Requires Mn(2+) as cofactor.

Its subcellular location is the cytoplasm. The enzyme catalyses (2R,3S)-3-isopropylmalate + NAD(+) = 4-methyl-2-oxopentanoate + CO2 + NADH. It functions in the pathway amino-acid biosynthesis; L-leucine biosynthesis; L-leucine from 3-methyl-2-oxobutanoate: step 3/4. Catalyzes the oxidation of 3-carboxy-2-hydroxy-4-methylpentanoate (3-isopropylmalate) to 3-carboxy-4-methyl-2-oxopentanoate. The product decarboxylates to 4-methyl-2 oxopentanoate. This Photobacterium profundum (strain SS9) protein is 3-isopropylmalate dehydrogenase.